Here is a 101-residue protein sequence, read N- to C-terminus: Small ribosomal subunit protein uS14 (101 aa).

It belongs to the universal ribosomal protein uS14 family. Part of the 30S ribosomal subunit. Contacts proteins S3 and S10.

Its function is as follows. Binds 16S rRNA, required for the assembly of 30S particles and may also be responsible for determining the conformation of the 16S rRNA at the A site. The polypeptide is Small ribosomal subunit protein uS14 (Chlamydia pneumoniae (Chlamydophila pneumoniae)).